Consider the following 250-residue polypeptide: 5'-nucleotidase SurE (250 aa).

A divalent metal cation contacts are provided by D8, D9, S40, and N95.

Belongs to the SurE nucleotidase family. The cofactor is a divalent metal cation.

The protein resides in the cytoplasm. The enzyme catalyses a ribonucleoside 5'-phosphate + H2O = a ribonucleoside + phosphate. Its function is as follows. Nucleotidase that shows phosphatase activity on nucleoside 5'-monophosphates. The sequence is that of 5'-nucleotidase SurE from Nitratidesulfovibrio vulgaris (strain DP4) (Desulfovibrio vulgaris).